Reading from the N-terminus, the 450-residue chain is Glucose-6-phosphate isomerase (450 aa).

Glutamate 291 acts as the Proton donor in catalysis. Active-site residues include histidine 312 and lysine 426.

It belongs to the GPI family.

It is found in the cytoplasm. It carries out the reaction alpha-D-glucose 6-phosphate = beta-D-fructose 6-phosphate. The protein operates within carbohydrate biosynthesis; gluconeogenesis. It functions in the pathway carbohydrate degradation; glycolysis; D-glyceraldehyde 3-phosphate and glycerone phosphate from D-glucose: step 2/4. Its function is as follows. Catalyzes the reversible isomerization of glucose-6-phosphate to fructose-6-phosphate. The sequence is that of Glucose-6-phosphate isomerase from Clostridium perfringens (strain ATCC 13124 / DSM 756 / JCM 1290 / NCIMB 6125 / NCTC 8237 / Type A).